Here is a 114-residue protein sequence, read N- to C-terminus: Fumarate reductase subunit D (114 aa).

3 helical membrane passes run 27–47 (ICFPVLLLILGVLLPLGLVPV), 50–70 (IVAFAHTWFGKLVILAVTIFP), and 94–114 (WVFYGLSALYSVIVFFAVIAL).

Belongs to the FrdD family. In terms of assembly, part of an enzyme complex containing four subunits: a flavoprotein (FrdA), an iron-sulfur protein (FrdB), and two hydrophobic anchor proteins (FrdC and FrdD).

It is found in the cell inner membrane. Functionally, anchors the catalytic components of the fumarate reductase complex to the cell membrane, binds quinones. This is Fumarate reductase subunit D from Actinobacillus pleuropneumoniae serotype 3 (strain JL03).